Reading from the N-terminus, the 86-residue chain is RNA-binding protein Hfq (86 aa).

The Sm domain occupies 9 to 68 (DPYLNTLRKEKVGVSIYLVNGIKLQGTIESFDQFVILLKNTVSQMVYKHAISTVVPVRPI).

It belongs to the Hfq family. In terms of assembly, homohexamer.

Its function is as follows. RNA chaperone that binds small regulatory RNA (sRNAs) and mRNAs to facilitate mRNA translational regulation in response to envelope stress, environmental stress and changes in metabolite concentrations. Also binds with high specificity to tRNAs. The polypeptide is RNA-binding protein Hfq (Pseudomonas fluorescens (strain Pf0-1)).